Here is an 81-residue protein sequence, read N- to C-terminus: MLELHFEFIDLNQPKMYKFVVCLLTLSFLLLSGLSNTALARVHHESSNPKIGNRVWDQKIFNNVKVRVLPSASRRGPGQTG.

The first 40 residues, 1-40, serve as a signal peptide directing secretion; the sequence is MLELHFEFIDLNQPKMYKFVVCLLTLSFLLLSGLSNTALA. An SCOOP motif motif is present at residues 65 to 79; that stretch reads KVRVLPSASRRGPGQ. The SxS motif essential for MIK2 binding motif lies at 71–73; that stretch reads SAS.

It belongs to the serine rich endogenous peptide (SCOOP) phytocytokine family. In terms of assembly, interacts with MIK2 (via extracellular leucine-rich repeat domain); this interaction triggers the formation of complex between MIK2 and the BAK1/SERK3 and SERK4 coreceptors, and subsequent BAK1 activation by phosphorylation.

Its subcellular location is the cell membrane. The protein resides in the secreted. The protein localises to the extracellular space. It localises to the apoplast. In terms of biological role, brassicaceae-specific phytocytokine (plant endogenous peptide released into the apoplast) perceived by MIK2 in a BAK1/SERK3 and SERK4 coreceptors-dependent manner, that modulates various physiological and antimicrobial processes including growth prevention and reactive oxygen species (ROS) response regulation. This Arabidopsis thaliana (Mouse-ear cress) protein is Serine rich endogenous peptide 21.